We begin with the raw amino-acid sequence, 422 residues long: UDP-N-acetylglucosamine 1-carboxyvinyltransferase (422 aa).

22–23 contacts phosphoenolpyruvate; sequence KN. Arg93 lines the UDP-N-acetyl-alpha-D-glucosamine pocket. The Proton donor role is filled by Cys117. Position 117 is a 2-(S-cysteinyl)pyruvic acid O-phosphothioketal (Cys117). Residues 122–126, Asp308, and Ile330 contribute to the UDP-N-acetyl-alpha-D-glucosamine site; that span reads RPVDL.

This sequence belongs to the EPSP synthase family. MurA subfamily.

It localises to the cytoplasm. The enzyme catalyses phosphoenolpyruvate + UDP-N-acetyl-alpha-D-glucosamine = UDP-N-acetyl-3-O-(1-carboxyvinyl)-alpha-D-glucosamine + phosphate. Its pathway is cell wall biogenesis; peptidoglycan biosynthesis. Cell wall formation. Adds enolpyruvyl to UDP-N-acetylglucosamine. This chain is UDP-N-acetylglucosamine 1-carboxyvinyltransferase, found in Legionella pneumophila (strain Paris).